Consider the following 469-residue polypeptide: Protein RUFY3 (469 aa).

A phosphothreonine mark is found at threonine 5 and threonine 12. Phosphoserine occurs at positions 34 and 49. Threonine 51 carries the post-translational modification Phosphothreonine. The RUN domain maps to 95–227 (DSDYAPLQQF…IDANFCMKGE (133 aa)). 2 coiled-coil regions span residues 271–362 (NRHL…VEKE) and 422–463 (KSEL…AANK).

Interacts with PAK1. Interacts (via C-terminus) with Ras-related Rab-5 proteins. Interacts (via C-terminus) with Ras-related Rap-2 proteins. Interacts with PIK3CA and PIK3R1. Interacts (via N-terminus) with FSCN1; this interaction induces neuron axon development. Interacts with DBN1. Interacts (via the second coiled coil) with GTP-, but not GDP-bound ARL8A and ARL8B. Interacts with dynactin/DCTN1 and the dynein intermediate chain DYNC1I1/2. Directly interacts with DYNC1LI1. Post-translationally, phosphorylated by PAK1.

The protein localises to the cytoplasm. It localises to the endomembrane system. Its subcellular location is the cell projection. It is found in the invadopodium. The protein resides in the growth cone. The protein localises to the perikaryon. It localises to the filopodium. Its subcellular location is the lamellipodium. It is found in the lysosome. Functionally, ARL8 effector that promotes the coupling of endolysosomes to dynein-dynactin for retrograde transport along microtubules. Acts by binding both GTP-bound ARL8 and dynein-dynactin. In nonneuronal cells, promotes concentration of endolysosomes in the juxtanuclear area. In hippocampal neurons, drives retrograde transport of endolysosomes from the axon to the soma. Plays a role in the generation of neuronal polarity formation and axon growth. Implicated in the formation of a single axon by developing neurons. May inhibit the formation of additional axons by inhibition of PI3K in minor neuronal processes. Plays a role in the formation of F-actin-enriched protrusive structures at the cell periphery. Plays a role in cytoskeletal organization by regulating the subcellular localization of FSCN1 and DBN1 at axonal growth cones. This is Protein RUFY3 from Pongo abelii (Sumatran orangutan).